The sequence spans 142 residues: Photosystem II extrinsic protein U (142 aa).

A signal peptide spans 1–28; sequence MKKIGLLLTIFSLCLGCLGLVPSDKAHA.

It belongs to the PsbU family. In terms of assembly, PSII is composed of 1 copy each of membrane proteins PsbA, PsbB, PsbC, PsbD, PsbE, PsbF, PsbH, PsbI, PsbJ, PsbK, PsbL, PsbM, PsbT, PsbX, PsbY, PsbZ, Psb30/Ycf12, peripheral proteins PsbO, CyanoQ (PsbQ), PsbU, PsbV and a large number of cofactors. It forms dimeric complexes.

Its subcellular location is the cellular thylakoid membrane. In terms of biological role, one of the extrinsic, lumenal subunits of photosystem II (PSII). PSII is a light-driven water plastoquinone oxidoreductase, using light energy to abstract electrons from H(2)O, generating a proton gradient subsequently used for ATP formation. The extrinsic proteins stabilize the structure of photosystem II oxygen-evolving complex (OEC), the ion environment of oxygen evolution and protect the OEC against heat-induced inactivation. The polypeptide is Photosystem II extrinsic protein U (Trichodesmium erythraeum (strain IMS101)).